The primary structure comprises 1133 residues: Roquin-1 (1133 aa).

7 residues coordinate Zn(2+): C14, C17, C33, H35, C38, C50, and D53. The RING-type; degenerate zinc-finger motif lies at 14–54 (CPICTQTFDETIRKPISLGCGHTVCKMCLNKLHRKACPFDQ). An HEPN-N region spans residues 89 to 173 (GVEDTKHYEE…RTVTELILQH (85 aa)). Residues 174–326 (QNPQQLSSNL…MQSIIDKLQT (153 aa)) form an ROQ region. The interval 327–396 (PASFAQSVQE…VVHGLVDYIQ (70 aa)) is HEPN-C. The C3H1-type zinc finger occupies 413–441 (KYKTYMCRDMKQRGGCPRGASCTFAHSQE). S462, S531, S535, and S863 each carry phosphoserine. Residues 505–542 (TQLIPRGTDPSYDSSLKPGKIDHLSSSAPGSPPDLLES) are disordered. Disordered stretches follow at residues 1000–1019 (NTLA…WPGM), 1058–1078 (NTSK…PAED), and 1094–1133 (QENI…SSAP). Positions 1007–1016 (QPPPPPPPKW) are enriched in pro residues. Positions 1058 to 1070 (NTSKQAENGQPEP) are enriched in polar residues. The segment covering 1096–1110 (NISLLSNKTSSLNLS) has biased composition (low complexity). S1110 carries the phosphoserine modification. A compositionally biased stretch (polar residues) spans 1119–1133 (NNDSQRSGVTPSSAP).

In terms of assembly, able to homodimerize. Interacts with DDX6 and EDC4. Interacts with CCR4-NOT deadenylase complex. Interacts with RC3H1; the interaction is RNA independent. In terms of processing, proteolytically cleaved after Arg-510 and Arg-579 by MALT1 in activated CD4(+) T cells; cleavage at Arg-510 and Arg-579 is critical for promoting RC3H1 degradation in response to T-cell receptor (TCR) stimulation, and hence is necessary for prolonging the stability of a set of mRNAs controlling Th17 cell differentiation. Widely expressed. Expressed at higher level in cerebellum, spleen, ovary and liver.

Its subcellular location is the cytoplasm. It localises to the P-body. The protein localises to the cytoplasmic granule. It catalyses the reaction S-ubiquitinyl-[E2 ubiquitin-conjugating enzyme]-L-cysteine + [acceptor protein]-L-lysine = [E2 ubiquitin-conjugating enzyme]-L-cysteine + N(6)-ubiquitinyl-[acceptor protein]-L-lysine.. The protein operates within protein modification; protein ubiquitination. Its function is as follows. Post-transcriptional repressor of mRNAs containing a conserved stem loop motif, called constitutive decay element (CDE), which is often located in the 3'-UTR, as in HMGXB3, ICOS, IER3, NFKBID, NFKBIZ, PPP1R10, TNF, TNFRSF4 and in many more mRNAs. Cleaves translationally inactive mRNAs harboring a stem-loop (SL), often located in their 3'-UTRs, during the early phase of inflammation in a helicase UPF1-independent manner. Binds to CDE and promotes mRNA deadenylation and degradation. This process does not involve miRNAs. In follicular helper T (Tfh) cells, represses of ICOS and TNFRSF4 expression, thus preventing spontaneous Tfh cell differentiation, germinal center B-cell differentiation in the absence of immunization and autoimmunity. In resting or LPS-stimulated macrophages, controls inflammation by suppressing TNF expression. Also recognizes CDE in its own mRNA and in that of paralogous RC3H2, possibly leading to feedback loop regulation. Recognizes and binds mRNAs containing a hexaloop stem-loop motif, called alternative decay element (ADE). Together with ZC3H12A, destabilizes TNFRSF4/OX40 mRNA by binding to the conserved stem loop structure in its 3'UTR. Able to interact with double-stranded RNA (dsRNA). miRNA-binding protein that regulates microRNA homeostasis. Enhances DICER-mediated processing of pre-MIR146a but reduces mature MIR146a levels through an increase of 3' end uridylation. Both inhibits ICOS mRNA expression and they may act together to exert the suppression. Acts as a ubiquitin E3 ligase. Pairs with E2 enzymes UBE2A, UBE2B, UBE2D2, UBE2F, UBE2G1, UBE2G2 and UBE2L3 and produces polyubiquitin chains. Shows the strongest activity when paired with UBE2N:UBE2V1 or UBE2N:UBE2V2 E2 complexes and generate both short and long polyubiquitin chains. The chain is Roquin-1 from Homo sapiens (Human).